Here is a 313-residue protein sequence, read N- to C-terminus: MLRLRTPSRIHITLIDLNGSIGRVDGGVGLALEEPHIEIKAKESETFVLKGEPINRERFEIAAAKMAEYCGRGAEIEVVSDYDAHVGLGSGTQISLAVGRAFSELYGLNLTTRQIAEIMGRGGTSGIGVAVFDHGGLVVDGGHSTKEKKSFLPSSASRAKPAPMIARLDFPDWNVVLAIPDLKGFFGEREVNLFQKSCPVPLEDVREICHLILMKMLPAVVEADLDEFGKALKRIQELGFKKAEVEQYGELIKGCFDLADCIGMSSTGPTVYAITDSNAGGIERSLRDYFAEKGYECRTIVTKARNRGVEIEV.

The protein belongs to the beta-RFA-P synthase family. Homodimer.

The catalysed reaction is 5-phospho-alpha-D-ribose 1-diphosphate + 4-hydroxybenzoate + H(+) = 4-(beta-D-ribofuranosyl)phenol 5'-phosphate + CO2 + diphosphate. The enzyme catalyses 4-aminobenzoate + 5-phospho-alpha-D-ribose 1-diphosphate + H(+) = 4-(beta-D-ribofuranosyl)aminobenzene 5'-phosphate + CO2 + diphosphate. It participates in cofactor biosynthesis; 5,6,7,8-tetrahydromethanopterin biosynthesis. Functionally, catalyzes the condensation of 4-hydroxybenzoate (HB) with 5-phospho-alpha-D-ribose 1-diphosphate (PRPP) to produce beta-ribofuranosylphenol 5'-phosphate (beta-RFH-P). Also catalyzes the condensation of 4-aminobenzoate (pABA) with PRPP to produce beta-ribofuranosylaminobenzene 5'-phosphate (beta-RFA-P). This Archaeoglobus fulgidus (strain ATCC 49558 / DSM 4304 / JCM 9628 / NBRC 100126 / VC-16) protein is Beta-ribofuranosylphenol 5'-phosphate synthase.